Here is a 331-residue protein sequence, read N- to C-terminus: Taste receptor type 2 member 38 (331 aa).

Topologically, residues methionine 1–serine 17 are extracellular. A helical membrane pass occupies residues phenylalanine 18–leucine 38. Topologically, residues valine 39–aspartate 54 are cytoplasmic. A helical membrane pass occupies residues isoleucine 55–alanine 75. Residues isoleucine 76 to alanine 94 are Extracellular-facing. Residues isoleucine 95 to leucine 115 traverse the membrane as a helical segment. Over leucine 116–glutamine 142 the chain is Cytoplasmic. Residues methionine 143–phenylalanine 163 form a helical membrane-spanning segment. Topologically, residues serine 164–asparagine 198 are extracellular. Asparagine 177 carries an N-linked (GlcNAc...) asparagine glycan. The chain crosses the membrane as a helical span at residues valine 199 to leucine 219. The Cytoplasmic portion of the chain corresponds to glycine 220–arginine 243. Residues alanine 244 to isoleucine 264 traverse the membrane as a helical segment. Topologically, residues serine 265–glycine 276 are extracellular. Residues glycine 277–isoleucine 297 traverse the membrane as a helical segment. The Cytoplasmic segment spans residues serine 298–leucine 331.

This sequence belongs to the G-protein coupled receptor T2R family. As to expression, expressed in tongue, stomach and duodenum.

It localises to the membrane. Its function is as follows. Putative taste receptor which may play a role in the perception of bitterness. This Rattus norvegicus (Rat) protein is Taste receptor type 2 member 38 (Tas2r38).